A 179-amino-acid chain; its full sequence is 6,7-dimethyl-8-ribityllumazine synthase (179 aa).

5-amino-6-(D-ribitylamino)uracil-binding positions include Trp-13, 45–47, and 68–70; these read AVE and VVI. 73–74 is a binding site for (2S)-2-hydroxy-3-oxobutyl phosphate; the sequence is DT. Catalysis depends on His-76, which acts as the Proton donor. Residue Phe-101 coordinates 5-amino-6-(D-ribitylamino)uracil. Residue Arg-115 coordinates (2S)-2-hydroxy-3-oxobutyl phosphate. The interval 157 to 179 is disordered; it reads AKAAKKPAKAAAKTQKKKKKVRK.

The protein belongs to the DMRL synthase family.

The enzyme catalyses (2S)-2-hydroxy-3-oxobutyl phosphate + 5-amino-6-(D-ribitylamino)uracil = 6,7-dimethyl-8-(1-D-ribityl)lumazine + phosphate + 2 H2O + H(+). Its pathway is cofactor biosynthesis; riboflavin biosynthesis; riboflavin from 2-hydroxy-3-oxobutyl phosphate and 5-amino-6-(D-ribitylamino)uracil: step 1/2. Its function is as follows. Catalyzes the formation of 6,7-dimethyl-8-ribityllumazine by condensation of 5-amino-6-(D-ribitylamino)uracil with 3,4-dihydroxy-2-butanone 4-phosphate. This is the penultimate step in the biosynthesis of riboflavin. The chain is 6,7-dimethyl-8-ribityllumazine synthase from Bdellovibrio bacteriovorus (strain ATCC 15356 / DSM 50701 / NCIMB 9529 / HD100).